The following is a 213-amino-acid chain: Large ribosomal subunit protein uL3 (213 aa).

Belongs to the universal ribosomal protein uL3 family. In terms of assembly, part of the 50S ribosomal subunit. Forms a cluster with proteins L14 and L19.

Functionally, one of the primary rRNA binding proteins, it binds directly near the 3'-end of the 23S rRNA, where it nucleates assembly of the 50S subunit. The polypeptide is Large ribosomal subunit protein uL3 (Petrotoga mobilis (strain DSM 10674 / SJ95)).